Here is a 274-residue protein sequence, read N- to C-terminus: NAD-dependent protein deacetylase (274 aa).

The region spanning 1–274 (MDSRMSDLQA…CDEVLAEVVS (274 aa)) is the Deacetylase sirtuin-type domain. NAD(+) is bound by residues 26 to 46 (GAGCSTASGIPDYRDGQGQWK) and 104 to 107 (QNVD). H122 acts as the Proton acceptor in catalysis. Positions 130, 133, 181, and 184 each coordinate Zn(2+). NAD(+) contacts are provided by residues 221–223 (GSS), 247–249 (NLG), and C265.

The protein belongs to the sirtuin family. Class II subfamily. Zn(2+) is required as a cofactor.

Its subcellular location is the cytoplasm. The catalysed reaction is N(6)-acetyl-L-lysyl-[protein] + NAD(+) + H2O = 2''-O-acetyl-ADP-D-ribose + nicotinamide + L-lysyl-[protein]. Functionally, NAD-dependent protein deacetylase which modulates the activities of several enzymes which are inactive in their acetylated form. This is NAD-dependent protein deacetylase from Bordetella bronchiseptica (strain ATCC BAA-588 / NCTC 13252 / RB50) (Alcaligenes bronchisepticus).